Reading from the N-terminus, the 126-residue chain is Large ribosomal subunit protein bL12c (126 aa).

It belongs to the bacterial ribosomal protein bL12 family. Homodimer. Part of the ribosomal stalk of the 50S ribosomal subunit. Forms a multimeric L10(L12)X complex, where L10 forms an elongated spine to which 2 to 4 L12 dimers bind in a sequential fashion. Binds GTP-bound translation factors.

Its subcellular location is the plastid. The protein resides in the cyanelle. Its function is as follows. Forms part of the ribosomal stalk which helps the ribosome interact with GTP-bound translation factors. Is thus essential for accurate translation. The polypeptide is Large ribosomal subunit protein bL12c (Cyanophora paradoxa).